A 318-amino-acid chain; its full sequence is Methionyl-tRNA formyltransferase (318 aa).

Residue 112-115 (SILP) participates in (6S)-5,6,7,8-tetrahydrofolate binding.

The protein belongs to the Fmt family.

The catalysed reaction is L-methionyl-tRNA(fMet) + (6R)-10-formyltetrahydrofolate = N-formyl-L-methionyl-tRNA(fMet) + (6S)-5,6,7,8-tetrahydrofolate + H(+). Functionally, attaches a formyl group to the free amino group of methionyl-tRNA(fMet). The formyl group appears to play a dual role in the initiator identity of N-formylmethionyl-tRNA by promoting its recognition by IF2 and preventing the misappropriation of this tRNA by the elongation apparatus. In Shewanella sp. (strain MR-4), this protein is Methionyl-tRNA formyltransferase.